A 217-amino-acid polypeptide reads, in one-letter code: Phosphatidylserine decarboxylase proenzyme (217 aa).

The Schiff-base intermediate with substrate; via pyruvic acid role is filled by serine 183. Residue serine 183 is modified to Pyruvic acid (Ser); by autocatalysis.

Belongs to the phosphatidylserine decarboxylase family. PSD-A subfamily. In terms of assembly, heterodimer of a large membrane-associated beta subunit and a small pyruvoyl-containing alpha subunit. It depends on pyruvate as a cofactor. Post-translationally, is synthesized initially as an inactive proenzyme. Formation of the active enzyme involves a self-maturation process in which the active site pyruvoyl group is generated from an internal serine residue via an autocatalytic post-translational modification. Two non-identical subunits are generated from the proenzyme in this reaction, and the pyruvate is formed at the N-terminus of the alpha chain, which is derived from the carboxyl end of the proenzyme. The post-translation cleavage follows an unusual pathway, termed non-hydrolytic serinolysis, in which the side chain hydroxyl group of the serine supplies its oxygen atom to form the C-terminus of the beta chain, while the remainder of the serine residue undergoes an oxidative deamination to produce ammonia and the pyruvoyl prosthetic group on the alpha chain.

The protein localises to the cell membrane. The enzyme catalyses a 1,2-diacyl-sn-glycero-3-phospho-L-serine + H(+) = a 1,2-diacyl-sn-glycero-3-phosphoethanolamine + CO2. Its pathway is phospholipid metabolism; phosphatidylethanolamine biosynthesis; phosphatidylethanolamine from CDP-diacylglycerol: step 2/2. Functionally, catalyzes the formation of phosphatidylethanolamine (PtdEtn) from phosphatidylserine (PtdSer). The polypeptide is Phosphatidylserine decarboxylase proenzyme (Cupriavidus pinatubonensis (strain JMP 134 / LMG 1197) (Cupriavidus necator (strain JMP 134))).